A 177-amino-acid chain; its full sequence is Ribosome maturation factor RimM (177 aa).

The region spanning 96-177 is the PRC barrel domain; that stretch reads DNEFYWVDLI…KITVDWGLDY (82 aa).

It belongs to the RimM family. As to quaternary structure, binds ribosomal protein uS19.

The protein localises to the cytoplasm. Its function is as follows. An accessory protein needed during the final step in the assembly of 30S ribosomal subunit, possibly for assembly of the head region. Essential for efficient processing of 16S rRNA. May be needed both before and after RbfA during the maturation of 16S rRNA. It has affinity for free ribosomal 30S subunits but not for 70S ribosomes. In Herminiimonas arsenicoxydans, this protein is Ribosome maturation factor RimM.